Consider the following 591-residue polypeptide: Paralemmin-3 (591 aa).

4 consecutive repeats follow at residues 171–174, 183–186, 224–227, and 234–237; these read EKNK, EKNQ, and KNQD. Polar residues predominate over residues 282 to 293; it reads DQTQSTSDQNME. 3 disordered regions span residues 282-317, 332-413, and 515-591; these read DQTQ…TKDQ, KGTT…QNQD, and PDLK…CVVM. Basic and acidic residues-rich tracts occupy residues 306 to 317 and 349 to 383; these read SQSEGKIQTKDQ and EPKE…DMDP. 2 stretches are compositionally biased toward polar residues: residues 385–413 and 528–542; these read QLST…QNQD and QESS…TIAQ. A compositionally biased stretch (low complexity) spans 543–554; sequence SSSAEGNSSPES. Residues 559–575 are compositionally biased toward polar residues; it reads QKSQGTDSQQGGNTATQ. A Nuclear localization signal motif is present at residues 579 to 583; it reads RRKKK. 2 S-palmitoyl cysteine lipidation sites follow: Cys585 and Cys587. Cys588 is modified (cysteine methyl ester). Cys588 is lipidated: S-farnesyl cysteine. Residues 589 to 591 constitute a propeptide, removed in mature form; that stretch reads VVM.

The protein belongs to the paralemmin family. Post-translationally, may be phosphorylated during oocyte maturation. In terms of processing, palmitoylated on Cys-585 and Cys-587 and prenylated on Cys-588; which is required for membrane association. In Xenopus oocyte, in the central nervous system cells of tadpoles and adult frogs, and transiently in epithelial cells of stomach and gut of tadpoles. Highly expressed in kidney.

The protein resides in the cytoplasm. It localises to the nucleus. It is found in the cell membrane. Functionally, maternal ATP-binding protein that may have multiple functions during development, one of which may be associated with the development and maintenance of the central nervous system. This is Paralemmin-3 (palm3) from Xenopus laevis (African clawed frog).